We begin with the raw amino-acid sequence, 1072 residues long: Vacuolar membrane protease (1072 aa).

Residues 1-9 (MINPISFRP) are Cytoplasmic-facing. A helical membrane pass occupies residues 10-30 (GPVTFWTTLIYLALLIPIVII). Topologically, residues 31-404 (NEKTPAAPKT…SFVLFGLRGM (374 aa)) are vacuolar. N-linked (GlcNAc...) asparagine glycosylation is found at Asn-48, Asn-116, Asn-119, and Asn-128. Zn(2+) is bound by residues His-185 and Asp-197. The active-site Proton acceptor is the Glu-231. Zn(2+)-binding residues include Glu-232, Glu-257, and His-330. Residues 405-425 (FAWSLTLLIATPLVLVGITWL) traverse the membrane as a helical segment. The Cytoplasmic portion of the chain corresponds to 426 to 457 (LRNLDKDYFFTSTVKTKEHPEYEAVPIGGWKG). A helical transmembrane segment spans residues 458–478 (FFRFPFALGVAVFFTISSALL). The Vacuolar portion of the chain corresponds to 479 to 492 (MNKVNPLIVYSSRY). The chain crosses the membrane as a helical span at residues 493 to 513 (SVWVMMVSIFYFSFWMIMRGA). Residues 514 to 523 (NFVRPSALHR) lie on the Cytoplasmic side of the membrane. Residues 524–544 (GYANLWLFVFGWIVLVAVTAL) form a helical membrane-spanning segment. Over 545–554 (EDRRRIAAGY) the chain is Vacuolar. Residues 555–575 (IFVFLESAIFLSCLISFVELL) traverse the membrane as a helical segment. Residues 576 to 747 (AVPRKSSYAL…YDHEQEWSGH (172 aa)) are Cytoplasmic-facing. Residues 593–713 (GQEHDHNGYQ…GTNDRGRTTF (121 aa)) form a disordered region. The segment covering 606–617 (DSTDEPSLRARA) has biased composition (basic and acidic residues). Residues 643–661 (GTTNGLSTAPSVAAHSSQP) show a composition bias toward polar residues. Residues 748–768 (LPSWAWFFQFLLLGPFMIILA) form a helical membrane-spanning segment. Residues 769–789 (AQTGLMLTDAVYQTGSDGSKL) are Vacuolar-facing. The helical transmembrane segment at 790–810 (ITPYLIIFVFTVLLILPLTPF) threads the bilayer. At 811–817 (IHRVTHH) the chain is on the cytoplasmic side. The chain crosses the membrane as a helical span at residues 818–838 (IPVFLLVVFIVTLTYNLIAFP). The Vacuolar portion of the chain corresponds to 839 to 1072 (FSANNRYKTF…VEGRKAFKIV (234 aa)). N-linked (GlcNAc...) asparagine glycans are attached at residues Asn-932 and Asn-974.

It belongs to the peptidase M28 family. Zn(2+) is required as a cofactor.

Its subcellular location is the vacuole membrane. Functionally, may be involved in vacuolar sorting and osmoregulation. The polypeptide is Vacuolar membrane protease (Neurospora crassa (strain ATCC 24698 / 74-OR23-1A / CBS 708.71 / DSM 1257 / FGSC 987)).